A 296-amino-acid chain; its full sequence is MQIDEQPGNAIGAAVEGFDHATASDADIDALKSTIYTKKIAVLKGQDLSPQQFLALGKRLGRPEAYYEPMYQHPEVTEIFVSSNVPENGKQIGVPKTGKFWHADYQFMPDPFGITLIYPQVIPEKNRGTYFIDMGRAYDRLPEDLKKEISGTYCRHSVRKYFKIRPHDVYRPISEIIEEVERKTPAVVQPTTFTHPMTGETVLYISEGFTVGIEDQDGKPLDEELLKRLFDATGQLDESFEHDNIHLQSFEQGDLLVWDNRSLIHRARHTTTPEPTVSYRVTVHDERKLHDGIQAA.

The (3R)-3-[(carboxymethyl)amino]butanoate site is built by Y66, Y71, and G98. Y66, Y71, and G98 together coordinate (3R)-3-{[carboxy(hydroxy)methyl]amino}butanoate. Positions 102 and 104 each coordinate Fe(2+). The (3R)-3-[(carboxymethyl)amino]butanoate site is built by Y105 and K163. (3R)-3-{[carboxy(hydroxy)methyl]amino}butanoate is bound by residues Y105 and K163. Residue H265 coordinates Fe(2+). Position 269 (H269) interacts with 2-oxoglutarate. (3R)-3-[(carboxymethyl)amino]butanoate is bound at residue R280. R280 is a binding site for (3R)-3-{[carboxy(hydroxy)methyl]amino}butanoate.

Belongs to the TfdA dioxygenase family. Requires Fe(2+) as cofactor.

It carries out the reaction a (3R)-3-[(carboxymethyl)amino]fatty acid + 2 2-oxoglutarate + 2 O2 = a (3R)-3-isocyanyl-fatty acid + 2 succinate + 3 CO2 + 2 H2O. The catalysed reaction is a (3R)-3-[(carboxymethyl)amino]fatty acid + 2-oxoglutarate + O2 = a (3R)-3-{[carboxy(hydroxy)methyl]amino}fatty acid + succinate + CO2. It catalyses the reaction a (3R)-3-{[carboxy(hydroxy)methyl]amino}fatty acid + 2-oxoglutarate + O2 = a (3R)-3-isocyanyl-fatty acid + succinate + 2 CO2 + 2 H2O. The enzyme catalyses (3R)-3-[(carboxymethyl)amino]butanoate + 2 2-oxoglutarate + 2 O2 = (3R)-3-isocyanylbutanoate + 2 succinate + 3 CO2 + 2 H2O. It carries out the reaction (3R)-3-[(carboxymethyl)amino]butanoate + 2-oxoglutarate + O2 = (3R)-3-{[carboxy(hydroxy)methyl]amino}butanoate + succinate + CO2. The catalysed reaction is (3R)-3-{[carboxy(hydroxy)methyl]amino}butanoate + 2-oxoglutarate + O2 = (3R)-3-isocyanylbutanoate + succinate + 2 CO2 + 2 H2O. Its function is as follows. Involved in the biosynthesis of a unique class of isonitrile lipopeptides (INLPs). Catalyzes the conversion of (3R)-3-[(carboxymethyl)amino]fatty acids such as (3R)-3-[(carboxymethyl)amino]butanoate (CABA) to (3R)-3-isocyanylbutanoate (INBA) through an oxidative decarboxylation mechanism, thereby generating the isonitrile group of INLPs. This chain is (3R)-3-[(carboxymethyl)amino]fatty acid oxygenase/decarboxylase, found in Streptomyces coeruleorubidus.